The chain runs to 173 residues: Small ribosomal subunit protein uS5 (173 aa).

Positions 18–81 constitute an S5 DRBM domain; sequence YVEKLVKLNR…EKAKANMVTF (64 aa).

This sequence belongs to the universal ribosomal protein uS5 family. As to quaternary structure, part of the 30S ribosomal subunit. Contacts proteins S4 and S8.

With S4 and S12 plays an important role in translational accuracy. Its function is as follows. Located at the back of the 30S subunit body where it stabilizes the conformation of the head with respect to the body. The protein is Small ribosomal subunit protein uS5 of Treponema denticola (strain ATCC 35405 / DSM 14222 / CIP 103919 / JCM 8153 / KCTC 15104).